A 167-amino-acid chain; its full sequence is Ubiquitin-conjugating enzyme E2 15 (167 aa).

The 161-residue stretch at 5 to 165 (ASEQLLRKQL…VRRLVRRSIE (161 aa)) folds into the UBC core domain. C90 functions as the Glycyl thioester intermediate in the catalytic mechanism.

Belongs to the ubiquitin-conjugating enzyme family.

It catalyses the reaction S-ubiquitinyl-[E1 ubiquitin-activating enzyme]-L-cysteine + [E2 ubiquitin-conjugating enzyme]-L-cysteine = [E1 ubiquitin-activating enzyme]-L-cysteine + S-ubiquitinyl-[E2 ubiquitin-conjugating enzyme]-L-cysteine.. Its pathway is protein modification; protein ubiquitination. Catalyzes the covalent attachment of ubiquitin to other proteins. Has a role in the formation of chromatin structures that influence the localization of transcriptional silencing factors. The chain is Ubiquitin-conjugating enzyme E2 15 (ubc15) from Schizosaccharomyces pombe (strain 972 / ATCC 24843) (Fission yeast).